We begin with the raw amino-acid sequence, 317 residues long: Acetyl-coenzyme A carboxylase carboxyl transferase subunit alpha (317 aa).

The 262-residue stretch at 33–294 (NLDDEITRLQ…KKRLLADLAD (262 aa)) folds into the CoA carboxyltransferase C-terminal domain.

This sequence belongs to the AccA family. In terms of assembly, acetyl-CoA carboxylase is a heterohexamer composed of biotin carboxyl carrier protein (AccB), biotin carboxylase (AccC) and two subunits each of ACCase subunit alpha (AccA) and ACCase subunit beta (AccD).

It is found in the cytoplasm. The catalysed reaction is N(6)-carboxybiotinyl-L-lysyl-[protein] + acetyl-CoA = N(6)-biotinyl-L-lysyl-[protein] + malonyl-CoA. It functions in the pathway lipid metabolism; malonyl-CoA biosynthesis; malonyl-CoA from acetyl-CoA: step 1/1. Component of the acetyl coenzyme A carboxylase (ACC) complex. First, biotin carboxylase catalyzes the carboxylation of biotin on its carrier protein (BCCP) and then the CO(2) group is transferred by the carboxyltransferase to acetyl-CoA to form malonyl-CoA. The protein is Acetyl-coenzyme A carboxylase carboxyl transferase subunit alpha of Histophilus somni (strain 2336) (Haemophilus somnus).